Consider the following 780-residue polypeptide: ATP-dependent 6-phosphofructokinase, muscle type (780 aa).

T2 bears the N-acetylthreonine mark. Positions 2 to 390 (THEEHHAAKT…NWEVYKLLAH (389 aa)) are N-terminal catalytic PFK domain 1. Residues G25, 88 to 89 (RC), and 118 to 121 (GDGS) contribute to the ATP site. D119 contacts Mg(2+). Phosphoserine is present on S133. Residues 164–166 (SID), R201, 208–210 (MGR), E264, R292, and 298–301 (HVQR) each bind substrate. Residue D166 is the Proton acceptor of the active site. S377 carries the phosphoserine modification. The segment at 391 to 401 (VRPPVSKGGLH) is interdomain linker. The segment at 402-780 (TVAVMNVGAP…SRKRSGEAAV (379 aa)) is C-terminal regulatory PFK domain 2. Beta-D-fructose 2,6-bisphosphate-binding positions include R471 and 528–532 (TVSNN). An O-linked (GlcNAc) serine glycan is attached at S530. Residue K557 is modified to N6-(2-hydroxyisobutyryl)lysine. Beta-D-fructose 2,6-bisphosphate is bound by residues R566, 573 to 575 (MGG), E629, R655, and 661 to 664 (HMQQ). The residue at position 667 (S667) is a Phosphoserine. R735 serves as a coordination point for beta-D-fructose 2,6-bisphosphate. Phosphoserine is present on S775.

Belongs to the phosphofructokinase type A (PFKA) family. ATP-dependent PFK group I subfamily. Eukaryotic two domain clade 'E' sub-subfamily. As to quaternary structure, homo- and heterotetramers. Phosphofructokinase (PFK) enzyme functions as a tetramer composed of different combinations of 3 types of subunits, called PFKM (M), PFKL (L) and PFKP (P). The composition of the PFK tetramer differs according to the tissue type it is present in. The kinetic and regulatory properties of the tetrameric enzyme are dependent on the subunit composition, hence can vary across tissues. Isoform 2 and isoform 3 interact (via N-terminal testis-specific region) with GSTM5. Isoform 2 and isoform 3 interact (via C-terminus) with HK1 (via N-terminal spermatogenic cell-specific region). It depends on Mg(2+) as a cofactor. GlcNAcylation decreases enzyme activity. As to expression, isoform 1 is expressed in skeletal muscle (at protein level). Isoform 2 and isoform 3 are testis-specific and are detected in quiescent sperm (at protein level). They are first detected in the cytoplasm of round spermatids and subsequently in the flagellum of elongated spermatids extending into the seminiferous tubule lumen (at protein level). Isoform 2 is expressed at higher level than isoform 3 in testis.

It localises to the cytoplasm. The protein localises to the cell projection. It is found in the cilium. The protein resides in the flagellum. The catalysed reaction is beta-D-fructose 6-phosphate + ATP = beta-D-fructose 1,6-bisphosphate + ADP + H(+). It participates in carbohydrate degradation; glycolysis; D-glyceraldehyde 3-phosphate and glycerone phosphate from D-glucose: step 3/4. Allosterically activated by ADP, AMP, or fructose 2,6-bisphosphate, and allosterically inhibited by ATP or citrate. Its function is as follows. Catalyzes the phosphorylation of D-fructose 6-phosphate to fructose 1,6-bisphosphate by ATP, the first committing step of glycolysis. The sequence is that of ATP-dependent 6-phosphofructokinase, muscle type (Pfkm) from Mus musculus (Mouse).